The primary structure comprises 338 residues: UDP-3-O-acylglucosamine N-acyltransferase (338 aa).

His-251 functions as the Proton acceptor in the catalytic mechanism.

Belongs to the transferase hexapeptide repeat family. LpxD subfamily. In terms of assembly, homotrimer.

It carries out the reaction a UDP-3-O-[(3R)-3-hydroxyacyl]-alpha-D-glucosamine + a (3R)-hydroxyacyl-[ACP] = a UDP-2-N,3-O-bis[(3R)-3-hydroxyacyl]-alpha-D-glucosamine + holo-[ACP] + H(+). It participates in bacterial outer membrane biogenesis; LPS lipid A biosynthesis. Its function is as follows. Catalyzes the N-acylation of UDP-3-O-acylglucosamine using 3-hydroxyacyl-ACP as the acyl donor. Is involved in the biosynthesis of lipid A, a phosphorylated glycolipid that anchors the lipopolysaccharide to the outer membrane of the cell. The sequence is that of UDP-3-O-acylglucosamine N-acyltransferase from Psychrobacter cryohalolentis (strain ATCC BAA-1226 / DSM 17306 / VKM B-2378 / K5).